We begin with the raw amino-acid sequence, 144 residues long: Large-conductance mechanosensitive channel (144 aa).

2 helical membrane-spanning segments follow: residues 21-41 (VGII…ANVI) and 76-96 (GIFL…FCII). The tract at residues 105 to 144 (QRGGKTRRAVQTECGRDAAYRDPRSLETTKQRHGAGYNDD) is disordered. The span at 118–134 (CGRDAAYRDPRSLETTK) shows a compositional bias: basic and acidic residues.

The protein belongs to the MscL family. In terms of assembly, homopentamer.

The protein resides in the cell inner membrane. Functionally, channel that opens in response to stretch forces in the membrane lipid bilayer. May participate in the regulation of osmotic pressure changes within the cell. This is Large-conductance mechanosensitive channel from Sodalis glossinidius (strain morsitans).